Reading from the N-terminus, the 465-residue chain is Serine carboxypeptidase-like 46 (465 aa).

The signal sequence occupies residues 1-25 (MPRLQCLTMATSLILLLQALSLVSS). 3 disulfides stabilise this stretch: Cys-88/Cys-344, Cys-245/Cys-263, and Cys-288/Cys-313. Asn-137 and Asn-170 each carry an N-linked (GlcNAc...) asparagine glycan. Residue Ser-179 is part of the active site. N-linked (GlcNAc...) asparagine glycosylation occurs at Asn-246. Residues Asp-381 and His-438 contribute to the active site.

This sequence belongs to the peptidase S10 family. In terms of tissue distribution, ubiquitous.

It localises to the secreted. Its function is as follows. Probable carboxypeptidase. In Arabidopsis thaliana (Mouse-ear cress), this protein is Serine carboxypeptidase-like 46 (SCPL46).